The primary structure comprises 65 residues: Large ribosomal subunit protein uL29c (65 aa).

It belongs to the universal ribosomal protein uL29 family.

It is found in the plastid. It localises to the chloroplast. The polypeptide is Large ribosomal subunit protein uL29c (rpl29) (Guillardia theta (Cryptophyte)).